Here is a 131-residue protein sequence, read N- to C-terminus: MMWMICLFGGLGAMARYVLDVSIQRGWNRENRRTNRNFPLSTLVINGVASLCAGIAMMSYYSQSVDMDTVMMFVVGFLGGFSTFSTALNEVVSLIRQRRFTLALGYGIATVAVPLICVAAGFGIALLANPA.

Transmembrane regions (helical) follow at residues 38 to 58 (FPLSTLVINGVASLCAGIAMM), 69 to 89 (TVMMFVVGFLGGFSTFSTALN), and 108 to 128 (IATVAVPLICVAAGFGIALLA). Residues Gly79 and Ser82 each coordinate Na(+).

It belongs to the fluoride channel Fluc/FEX (TC 1.A.43) family.

Its subcellular location is the cell membrane. It carries out the reaction fluoride(in) = fluoride(out). Na(+) is not transported, but it plays an essential structural role and its presence is essential for fluoride channel function. In terms of biological role, fluoride-specific ion channel. Important for reducing fluoride concentration in the cell, thus reducing its toxicity. The polypeptide is Fluoride-specific ion channel FluC 1 (Bifidobacterium longum (strain NCC 2705)).